A 532-amino-acid chain; its full sequence is MGFNVPVINRDSEILKADAKKWLEQQDNQKKCVLVIVSIALLLDNMLYMVIVPIIPKYLRDIHNYQVTFEGYHNETSQLANGTYLVREVGGRINFLDEELELGWLFASKALLQIFVNPFSGYIIDRVGYEIPMILGLCTMFFSTAIFALGKSYGVLLFARSLQGFGSAFADTSGLAMIADRFTEENERSAALGIALAFISFGCLVAPPFGSVLYSLAGKPVPFLILSFVCLADAIAVFMVINPHRRGTDSHGEKVQGTPMWRLFMDPFIACCSGALIMANVSLAFLEPTITTWMSEMMPDTPGWLVGVIWLPPFFPHVLGVYVTVKMLRAFPHHTWAIAMVGLAMEGIACFAIPYTTSVMQLVIPLSFVCFGIALIDTSLLPMLGHLVDTRHVSVYGSVYAIADISYSLAYAFGPIIAGWIVTNWGFTALNIIIFATNVTYAPVLFLLRKVHSYDTLGAKGDTAEMTQLNSSAPAGGYNGKPEATTAESYQGWEDQQSYQNQAQIPNHAVSFQDSRPQAEFPAGYDPLNPQW.

At 1 to 31 (MGFNVPVINRDSEILKADAKKWLEQQDNQKK) the chain is on the cytoplasmic side. A helical membrane pass occupies residues 32 to 52 (CVLVIVSIALLLDNMLYMVIV). The Lumenal, vesicle portion of the chain corresponds to 53-101 (PIIPKYLRDIHNYQVTFEGYHNETSQLANGTYLVREVGGRINFLDEELE). 2 N-linked (GlcNAc...) asparagine glycosylation sites follow: Asn74 and Asn81. A helical transmembrane segment spans residues 102-121 (LGWLFASKALLQIFVNPFSG). At 122 to 130 (YIIDRVGYE) the chain is on the cytoplasmic side. A helical transmembrane segment spans residues 131–151 (IPMILGLCTMFFSTAIFALGK). At 152–160 (SYGVLLFAR) the chain is on the lumenal, vesicle side. Residues 161–180 (SLQGFGSAFADTSGLAMIAD) traverse the membrane as a helical segment. The Cytoplasmic segment spans residues 181–191 (RFTEENERSAA). A helical transmembrane segment spans residues 192 to 213 (LGIALAFISFGCLVAPPFGSVL). The Lumenal, vesicle portion of the chain corresponds to 214–219 (YSLAGK). Residues 220–242 (PVPFLILSFVCLADAIAVFMVIN) traverse the membrane as a helical segment. Residues 243–266 (PHRRGTDSHGEKVQGTPMWRLFMD) are Cytoplasmic-facing. Residues 267 to 286 (PFIACCSGALIMANVSLAFL) traverse the membrane as a helical segment. Residues 287–303 (EPTITTWMSEMMPDTPG) lie on the Lumenal, vesicle side of the membrane. A helical transmembrane segment spans residues 304–328 (WLVGVIWLPPFFPHVLGVYVTVKML). The Cytoplasmic portion of the chain corresponds to 329–335 (RAFPHHT). The chain crosses the membrane as a helical span at residues 336-356 (WAIAMVGLAMEGIACFAIPYT). Residues 357-367 (TSVMQLVIPLS) lie on the Lumenal, vesicle side of the membrane. The helical transmembrane segment at 368-388 (FVCFGIALIDTSLLPMLGHLV) threads the bilayer. Residues 389–393 (DTRHV) are Cytoplasmic-facing. A helical membrane pass occupies residues 394-412 (SVYGSVYAIADISYSLAYA). Residues 413–418 (FGPIIA) lie on the Lumenal, vesicle side of the membrane. The chain crosses the membrane as a helical span at residues 419-440 (GWIVTNWGFTALNIIIFATNVT). The Cytoplasmic segment spans residues 441-532 (YAPVLFLLRK…AGYDPLNPQW (92 aa)).

It belongs to the major facilitator superfamily. Vesicular transporter family. In terms of tissue distribution, detected in most regions of the nervous system including the nerve ring, the ventral and dorsal nerve cords, and the pharyngeal nervous system. Expressed in most cholinergic neurons. In addition, expressed in SIA, SIB and SMB sublateral motor neurons.

It is found in the cytoplasmic vesicle. The protein resides in the secretory vesicle. Its subcellular location is the synaptic vesicle membrane. Functionally, involved in acetylcholine transport into synaptic vesicles. In Caenorhabditis elegans, this protein is Vesicular acetylcholine transporter unc-17.